A 507-amino-acid polypeptide reads, in one-letter code: ATP synthase subunit alpha, chloroplastic (507 aa).

Residue 170–177 (GDRQTGKT) coordinates ATP.

The protein belongs to the ATPase alpha/beta chains family. F-type ATPases have 2 components, CF(1) - the catalytic core - and CF(0) - the membrane proton channel. CF(1) has five subunits: alpha(3), beta(3), gamma(1), delta(1), epsilon(1). CF(0) has four main subunits: a, b, b' and c.

Its subcellular location is the plastid. It localises to the chloroplast thylakoid membrane. It catalyses the reaction ATP + H2O + 4 H(+)(in) = ADP + phosphate + 5 H(+)(out). Produces ATP from ADP in the presence of a proton gradient across the membrane. The alpha chain is a regulatory subunit. This is ATP synthase subunit alpha, chloroplastic from Gossypium hirsutum (Upland cotton).